The primary structure comprises 251 residues: CDP-diacylglycerol pyrophosphatase (251 aa).

A helical membrane pass occupies residues 5 to 25; that stretch reads GYFLLAVIVIVAAAGVGYWKF.

This sequence belongs to the Cdh family.

Its subcellular location is the cell inner membrane. It carries out the reaction a CDP-1,2-diacyl-sn-glycerol + H2O = a 1,2-diacyl-sn-glycero-3-phosphate + CMP + 2 H(+). It participates in phospholipid metabolism; CDP-diacylglycerol degradation; phosphatidate from CDP-diacylglycerol: step 1/1. In Salmonella paratyphi A (strain ATCC 9150 / SARB42), this protein is CDP-diacylglycerol pyrophosphatase.